A 1087-amino-acid polypeptide reads, in one-letter code: Exportin-7 (1087 aa).

The Importin N-terminal domain occupies 30 to 96 (AEKALVEFTN…RNYVLNYLAT (67 aa)).

Belongs to the exportin family.

Its subcellular location is the cytoplasm. It localises to the nucleus. In terms of biological role, mediates the nuclear export of proteins (cargos) with broad substrate specificity. The protein is Exportin-7 (XPO7) of Gallus gallus (Chicken).